The sequence spans 48 residues: Large ribosomal subunit protein bL33B (48 aa).

The protein belongs to the bacterial ribosomal protein bL33 family.

The polypeptide is Large ribosomal subunit protein bL33B (rpmG 2) (Mycoplasmoides gallisepticum (strain R(low / passage 15 / clone 2)) (Mycoplasma gallisepticum)).